We begin with the raw amino-acid sequence, 65 residues long: Large ribosomal subunit protein uL29 (65 aa).

It belongs to the universal ribosomal protein uL29 family.

The sequence is that of Large ribosomal subunit protein uL29 from Buchnera aphidicola subsp. Cinara cedri (strain Cc).